Here is a 115-residue protein sequence, read N- to C-terminus: Phosphoribosyl-AMP cyclohydrolase (115 aa).

Asp80 is a binding site for Mg(2+). Cys81 lines the Zn(2+) pocket. Residues Asp82 and Asp84 each coordinate Mg(2+). Zn(2+)-binding residues include Cys97 and Cys104.

It belongs to the PRA-CH family. Homodimer. Mg(2+) is required as a cofactor. Requires Zn(2+) as cofactor.

It is found in the cytoplasm. The catalysed reaction is 1-(5-phospho-beta-D-ribosyl)-5'-AMP + H2O = 1-(5-phospho-beta-D-ribosyl)-5-[(5-phospho-beta-D-ribosylamino)methylideneamino]imidazole-4-carboxamide. The protein operates within amino-acid biosynthesis; L-histidine biosynthesis; L-histidine from 5-phospho-alpha-D-ribose 1-diphosphate: step 3/9. Catalyzes the hydrolysis of the adenine ring of phosphoribosyl-AMP. The sequence is that of Phosphoribosyl-AMP cyclohydrolase from Nocardia farcinica (strain IFM 10152).